The sequence spans 202 residues: Holliday junction branch migration complex subunit RuvA (202 aa).

Residues 1–63 (MIASLRGTVL…EDSMTLYGFT (63 aa)) form a domain I region. The domain II stretch occupies residues 64-142 (SQDDRDMFHV…AFAPAESADL (79 aa)). A flexible linker region spans residues 143 to 148 (SSAAPA). A domain III region spans residues 149-202 (AAGPVVEDVVEALIGLGFTDKMARPVVESVVAEQPDAATPVVLRAALSQLGAKK).

This sequence belongs to the RuvA family. As to quaternary structure, homotetramer. Forms an RuvA(8)-RuvB(12)-Holliday junction (HJ) complex. HJ DNA is sandwiched between 2 RuvA tetramers; dsDNA enters through RuvA and exits via RuvB. An RuvB hexamer assembles on each DNA strand where it exits the tetramer. Each RuvB hexamer is contacted by two RuvA subunits (via domain III) on 2 adjacent RuvB subunits; this complex drives branch migration. In the full resolvosome a probable DNA-RuvA(4)-RuvB(12)-RuvC(2) complex forms which resolves the HJ.

It is found in the cytoplasm. Its function is as follows. The RuvA-RuvB-RuvC complex processes Holliday junction (HJ) DNA during genetic recombination and DNA repair, while the RuvA-RuvB complex plays an important role in the rescue of blocked DNA replication forks via replication fork reversal (RFR). RuvA specifically binds to HJ cruciform DNA, conferring on it an open structure. The RuvB hexamer acts as an ATP-dependent pump, pulling dsDNA into and through the RuvAB complex. HJ branch migration allows RuvC to scan DNA until it finds its consensus sequence, where it cleaves and resolves the cruciform DNA. This Corynebacterium aurimucosum (strain ATCC 700975 / DSM 44827 / CIP 107346 / CN-1) (Corynebacterium nigricans) protein is Holliday junction branch migration complex subunit RuvA.